Consider the following 242-residue polypeptide: Large ribosomal subunit protein uL30y (242 aa).

The protein belongs to the universal ribosomal protein uL30 family.

This is Large ribosomal subunit protein uL30y (RPL7B) from Arabidopsis thaliana (Mouse-ear cress).